A 98-amino-acid chain; its full sequence is Large ribosomal subunit protein bL28 (98 aa).

The protein belongs to the bacterial ribosomal protein bL28 family.

The protein is Large ribosomal subunit protein bL28 of Bartonella bacilliformis (strain ATCC 35685 / KC583 / Herrer 020/F12,63).